We begin with the raw amino-acid sequence, 412 residues long: Peptidase T (412 aa).

Residue His79 coordinates Zn(2+). Asp81 is an active-site residue. Asp142 provides a ligand contact to Zn(2+). Glu176 serves as the catalytic Proton acceptor. The Zn(2+) site is built by Glu177, Asp199, and His381.

The protein belongs to the peptidase M20B family. The cofactor is Zn(2+).

The protein resides in the cytoplasm. The catalysed reaction is Release of the N-terminal residue from a tripeptide.. In terms of biological role, cleaves the N-terminal amino acid of tripeptides. This is Peptidase T from Exiguobacterium sp. (strain ATCC BAA-1283 / AT1b).